The following is a 173-amino-acid chain: Lipoprotein signal peptidase (173 aa).

Transmembrane regions (helical) follow at residues 12 to 32, 67 to 87, and 102 to 122; these read WLWLAAIMLALDQVTKYWTIQ, WQRYLFTAIAIVVSSYLVYLL, and ALILSGALGNVVDRMMFGYVI. Catalysis depends on residues D123 and D141. Residues 137 to 157 traverse the membrane as a helical segment; sequence FNIADSAIFTGAVIMIFESFF.

Belongs to the peptidase A8 family.

It localises to the cell inner membrane. The enzyme catalyses Release of signal peptides from bacterial membrane prolipoproteins. Hydrolyzes -Xaa-Yaa-Zaa-|-(S,diacylglyceryl)Cys-, in which Xaa is hydrophobic (preferably Leu), and Yaa (Ala or Ser) and Zaa (Gly or Ala) have small, neutral side chains.. Its pathway is protein modification; lipoprotein biosynthesis (signal peptide cleavage). Functionally, this protein specifically catalyzes the removal of signal peptides from prolipoproteins. The protein is Lipoprotein signal peptidase of Psychromonas ingrahamii (strain DSM 17664 / CCUG 51855 / 37).